A 69-amino-acid polypeptide reads, in one-letter code: Beta-defensin 114 (69 aa).

The N-terminal stretch at 1-26 (MRIFYYLHFLCYVTFILPATCTLVNA) is a signal peptide. 3 disulfide bridges follow: cysteine 29–cysteine 57, cysteine 36–cysteine 50, and cysteine 40–cysteine 58.

The protein belongs to the beta-defensin family. Expressed in epididymis, predominantly in the caput (at protein level).

The protein localises to the secreted. Has a salt-sensitive antimicrobial activity against Gram-negative bacteria, including E.coli, Gram-positive, including S.aureus, and fungi, including C.albicans. Binds to and neutralizes bacterial lipopolysaccharides (LPS), abolishing TNF production by macrophages challenged with LPS. Rescues the LPS-induced reduction of sperm motility in vitro and may protect from LPS-induced lethality. The protein is Beta-defensin 114 (DEFB114) of Homo sapiens (Human).